Here is a 148-residue protein sequence, read N- to C-terminus: Large ribosomal subunit protein bL9 (148 aa).

This sequence belongs to the bacterial ribosomal protein bL9 family.

Its function is as follows. Binds to the 23S rRNA. This chain is Large ribosomal subunit protein bL9, found in Azotobacter vinelandii (strain DJ / ATCC BAA-1303).